A 227-amino-acid chain; its full sequence is ATP-dependent Clp protease proteolytic subunit (227 aa).

Ser-123 serves as the catalytic Nucleophile. Residue His-148 is part of the active site.

It belongs to the peptidase S14 family. In terms of assembly, fourteen ClpP subunits assemble into 2 heptameric rings which stack back to back to give a disk-like structure with a central cavity, resembling the structure of eukaryotic proteasomes.

It is found in the cytoplasm. The enzyme catalyses Hydrolysis of proteins to small peptides in the presence of ATP and magnesium. alpha-casein is the usual test substrate. In the absence of ATP, only oligopeptides shorter than five residues are hydrolyzed (such as succinyl-Leu-Tyr-|-NHMec, and Leu-Tyr-Leu-|-Tyr-Trp, in which cleavage of the -Tyr-|-Leu- and -Tyr-|-Trp bonds also occurs).. Its function is as follows. Cleaves peptides in various proteins in a process that requires ATP hydrolysis. Has a chymotrypsin-like activity. Plays a major role in the degradation of misfolded proteins. The protein is ATP-dependent Clp protease proteolytic subunit of Chlorobium phaeobacteroides (strain DSM 266 / SMG 266 / 2430).